Here is a 254-residue protein sequence, read N- to C-terminus: Type II restriction enzyme HpaI (254 aa).

The catalysed reaction is Endonucleolytic cleavage of DNA to give specific double-stranded fragments with terminal 5'-phosphates.. A P subtype restriction enzyme that recognizes the double-stranded sequence 5'-GTTAAC-3' and cleaves after T-3. The chain is Type II restriction enzyme HpaI (hpaIR) from Haemophilus parainfluenzae.